The sequence spans 1938 residues: Myosin heavy chain, striated muscle (1938 aa).

The region spanning 29–79 (DGKKNCWVPDEKEGFASAEIQSSKGDEITVKIVADSSTRTVKKDDIQSMNP) is the Myosin N-terminal SH3-like domain. Positions 83–775 (EKLEDMANMT…VLGNLEEMRD (693 aa)) constitute a Myosin motor domain. 176-183 (GESGAGKT) contacts ATP. The tract at residues 653 to 675 (LNKLMKNLYSTHPHFVRCIIPNE) is actin-binding. Positions 778-805 (LSKIISMFQAHIRGYLIRKAYKKLQDQR) constitute an IQ domain. Residues 836 to 1938 (LLSIARQEEE…RSSVSVSASN (1103 aa)) are rodlike tail (S2 and LMM domains). Residues 836–1938 (LLSIARQEEE…RSSVSVSASN (1103 aa)) adopt a coiled-coil conformation. 2 stretches are compositionally biased toward basic and acidic residues: residues 1041 to 1058 (VRGD…DLKS) and 1212 to 1225 (SKLE…KREM). 4 disordered regions span residues 1041–1062 (VRGD…TQEN), 1187–1332 (SALR…EVRN), 1344–1363 (LEEE…KANN), and 1898–1938 (HELE…SASN). The segment covering 1265–1285 (RSINELQSQKSRLQAENSDLT) has biased composition (polar residues). Composition is skewed to basic and acidic residues over residues 1286 to 1303 (RQLE…KEKS), 1310 to 1332 (EDAR…EVRN), and 1344 to 1354 (LEEEQESKSDV). Over residues 1922 to 1938 (RSSVSVQRSSVSVSASN) the composition is skewed to low complexity.

It belongs to the TRAFAC class myosin-kinesin ATPase superfamily. Myosin family. Muscle myosin is a hexameric protein that consists of 2 heavy chain subunits (MHC), 2 alkali light chain subunits (MLC) and 2 regulatory light chain subunits (MLC-2).

It is found in the cytoplasm. The protein localises to the myofibril. In terms of biological role, muscle contraction. Its function is as follows. Myosin is a protein that binds to F-actin and has ATPase activity that is activated by F-actin. The protein is Myosin heavy chain, striated muscle of Argopecten irradians (Bay scallop).